Here is a 157-residue protein sequence, read N- to C-terminus: UPF0225 protein PA14_50900 (157 aa).

The protein belongs to the UPF0225 family.

The protein is UPF0225 protein PA14_50900 of Pseudomonas aeruginosa (strain UCBPP-PA14).